The sequence spans 399 residues: MATDDDGTPNWSELVTDILSLVFKHLSFTDFARAKTVCSSWYFASKSSSPRKNHTPWLILYQDTHWLMFNSDEEKFYRTVYLGRFAECRGVASCGSWVLVFDKEINFYIINPFTPQLIRLPPLEYSNTGTKFERPGNYVFHLLFDDRHRTSRAIVGNSVLWVDEKTKDYLVVWSYKEAFVPSPYIYYCSKRGQEWFEIPASTCGKLFRCLDMAYKDEKLYILTSNGSIRILDFSLGDLPRQIDNHPYSHRPFVTEFPNHKMGMRLTTSGDVVMIQCVTTGTHKRSPFRIFKLSSITETKESSHEVVGWETVHSFEDEESLVWDLSVTLPTKGVSGIKKDSIYYCHTSLSSSIRETCAYEIPTHKITAYDIPKQDIKPIRHRGILIGEARWFVPCFGAGE.

The 48-residue stretch at Pro-9–Pro-56 folds into the F-box domain.

In Arabidopsis thaliana (Mouse-ear cress), this protein is F-box protein At1g10110.